The chain runs to 447 residues: Chitobiosyldiphosphodolichol beta-mannosyltransferase (447 aa).

Topologically, residues Met1–Asn8 are lumenal. Residues Ile9–Val29 form a helical membrane-spanning segment. Topologically, residues Val30–Ala127 are cytoplasmic. Positions Val128–Val148 form an intramembrane region, helical. Over Lys149 to Lys447 the chain is Lumenal.

This sequence belongs to the glycosyltransferase group 1 family.

Its subcellular location is the endoplasmic reticulum membrane. The enzyme catalyses an N,N'-diacetylchitobiosyl-diphospho-di-trans,poly-cis-dolichol + GDP-alpha-D-mannose = a beta-D-Man-(1-&gt;4)-beta-D-GlcNAc-(1-&gt;4)-alpha-D-GlcNAc-diphospho-di-trans,poly-cis-dolichol + GDP + H(+). It participates in protein modification; protein glycosylation. Its function is as follows. Participates in the formation of the lipid-linked precursor oligosaccharide for N-glycosylation. Involved in assembling the dolichol-pyrophosphate-GlcNAc(2)-Man(5) intermediate on the cytoplasmic surface of the ER. This chain is Chitobiosyldiphosphodolichol beta-mannosyltransferase (ALG1), found in Kluyveromyces lactis (strain ATCC 8585 / CBS 2359 / DSM 70799 / NBRC 1267 / NRRL Y-1140 / WM37) (Yeast).